A 453-amino-acid polypeptide reads, in one-letter code: Allantoinase (453 aa).

Residues histidine 59, histidine 61, lysine 146, histidine 186, histidine 242, and aspartate 315 each coordinate Zn(2+). Lysine 146 carries the post-translational modification N6-carboxylysine.

This sequence belongs to the metallo-dependent hydrolases superfamily. Allantoinase family. In terms of assembly, homotetramer. Zn(2+) serves as cofactor. In terms of processing, carboxylation allows a single lysine to coordinate two zinc ions.

The enzyme catalyses (S)-allantoin + H2O = allantoate + H(+). Its pathway is nitrogen metabolism; (S)-allantoin degradation; allantoate from (S)-allantoin: step 1/1. Functionally, catalyzes the conversion of allantoin (5-ureidohydantoin) to allantoic acid by hydrolytic cleavage of the five-member hydantoin ring. The chain is Allantoinase from Escherichia coli (strain K12 / MC4100 / BW2952).